The sequence spans 251 residues: N-acetylmuramoyl-L-alanine amidase CwlA (251 aa).

A signal peptide spans 1–37; sequence MEIKQMLVPVSRYSVLCPYEMNPTEITFHNTYNDAPA. Positions 38 to 140 constitute an N-acetylmuramoyl-L-alanine amidase domain; sequence INERNNVANN…QERNGKYCPH (103 aa).

This sequence belongs to the N-acetylmuramoyl-L-alanine amidase 2 family.

The protein resides in the secreted. The catalysed reaction is Hydrolyzes the link between N-acetylmuramoyl residues and L-amino acid residues in certain cell-wall glycopeptides.. Functionally, autolysins are involved in some important biological processes such as cell separation, cell-wall turnover, competence for genetic transformation, formation of the flagella and sporulation. The sequence is that of N-acetylmuramoyl-L-alanine amidase CwlA (cwlA) from Bacillus sp.